Reading from the N-terminus, the 852-residue chain is Envelope glycoprotein gp160 (852 aa).

A signal peptide spans 1–32; it reads MRVKGIKKNYQHLWRWGGMMLLGILMICSATD. Topologically, residues 33 to 680 are extracellular; it reads KLWVTVYYGV…ITNWLWYIKI (648 aa). An N-linked (GlcNAc...) asparagine; by host glycan is attached at Asn49. A disulfide bridge connects residues Cys54 and Cys74. N-linked (GlcNAc...) asparagine; by host glycosylation is found at Asn88, Asn135, Asn138, Asn154, Asn158, Asn197, Asn234, Asn241, Asn262, Asn276, Asn289, Asn295, Asn301, Asn331, Asn354, and Asn360. Cystine bridges form between Cys119-Cys205, Cys126-Cys196, Cys131-Cys155, Cys218-Cys247, and Cys228-Cys239. The tract at residues 131–154 is V1; it reads CHDFNATNATSNSGKMMEGGEMKN. Residues 155–196 are V2; the sequence is CSFNITTSIRDKMQKEYALFYKLDIVPIDNDKTNTRYRLISC. The interval 296 to 329 is V3; the sequence is CTRPNNNTRKRITMGPGRVYYTTGQIIGDIRRAH. Cys296 and Cys330 are joined by a disulfide. A CD4-binding loop region spans residues 362–372; the sequence is SSGGDPEIVMH. Intrachain disulfides connect Cys376-Cys439 and Cys383-Cys412. The interval 383 to 412 is V4; that stretch reads CNTTQLFNSTWYRNTTGNITEGNSPITLPC. 6 N-linked (GlcNAc...) asparagine; by host glycosylation sites follow: Asn384, Asn390, Asn396, Asn400, Asn442, and Asn456. 2 V5 regions span residues 454-467 and 457-467; these read NNNE…FRPG and ETTDTEIFRPG. Residues 508–528 form a fusion peptide region; sequence AVGLGALFLGFLGAAGSTMGA. The tract at residues 570-588 is immunosuppression; the sequence is KQLQARVLAVERYLKDQQL. Cysteines 594 and 600 form a disulfide. N-linked (GlcNAc...) asparagine; by host glycans are attached at residues Asn607, Asn612, Asn621, Asn633, and Asn670. The stretch at 629–663 forms a coiled coil; it reads REIDNYTNLIYSLIEDSQIQQEKNEKELLELDKWA. Residues 658-679 form an MPER; binding to GalCer region; that stretch reads ELDKWASLWNWFNITNWLWYIK. A helical membrane pass occupies residues 681–701; that stretch reads FIMIVGGLIGLRIVFAVLSIV. Residues 702–852 are Cytoplasmic-facing; that stretch reads NRVRQGYSPL…IRQGLERALQ (151 aa). The short motif at 708 to 711 is the YXXL motif; contains endocytosis signal element; sequence YSPL. Residues 715 to 741 form a disordered region; sequence TRLPGRRGPDRPEGIEEEGGERDRDRS.

It belongs to the HIV-1 env protein family. The mature envelope protein (Env) consists of a homotrimer of non-covalently associated gp120-gp41 heterodimers. The resulting complex protrudes from the virus surface as a spike. There seems to be as few as 10 spikes on the average virion. Interacts with host CD4, CCR5 and CXCR4. Gp120 also interacts with the C-type lectins CD209/DC-SIGN and CLEC4M/DC-SIGNR (collectively referred to as DC-SIGN(R)). Gp120 and gp41 interact with GalCer. Gp120 interacts with host ITGA4/ITGB7 complex; on CD4+ T-cells, this interaction results in rapid activation of integrin ITGAL/LFA-1, which facilitates efficient cell-to-cell spreading of HIV-1. Gp120 interacts with cell-associated heparan sulfate; this interaction increases virus infectivity on permissive cells and may be involved in infection of CD4- cells. In terms of assembly, the mature envelope protein (Env) consists of a homotrimer of non-covalently associated gp120-gp41 heterodimers. The resulting complex protrudes from the virus surface as a spike. There seems to be as few as 10 spikes on the average virion. Post-translationally, highly glycosylated by host. The high number of glycan on the protein is reffered to as 'glycan shield' because it contributes to hide protein sequence from adaptive immune system. Palmitoylation of the transmembrane protein and of Env polyprotein (prior to its proteolytic cleavage) is essential for their association with host cell membrane lipid rafts. Palmitoylation is therefore required for envelope trafficking to classical lipid rafts, but not for viral replication. In terms of processing, specific enzymatic cleavages in vivo yield mature proteins. Envelope glycoproteins are synthesized as an inactive precursor that is heavily N-glycosylated and processed likely by host cell furin in the Golgi to yield the mature SU and TM proteins. The cleavage site between SU and TM requires the minimal sequence [KR]-X-[KR]-R. About 2 of the 9 disulfide bonds of gp41 are reduced by P4HB/PDI, following binding to CD4 receptor.

The protein localises to the virion membrane. It localises to the host cell membrane. It is found in the host endosome membrane. In terms of biological role, oligomerizes in the host endoplasmic reticulum into predominantly trimers. In a second time, gp160 transits in the host Golgi, where glycosylation is completed. The precursor is then proteolytically cleaved in the trans-Golgi and thereby activated by cellular furin or furin-like proteases to produce gp120 and gp41. Its function is as follows. Attaches the virus to the host lymphoid cell by binding to the primary receptor CD4. This interaction induces a structural rearrangement creating a high affinity binding site for a chemokine coreceptor like CXCR4 and/or CCR5. Acts as a ligand for CD209/DC-SIGN and CLEC4M/DC-SIGNR, which are respectively found on dendritic cells (DCs), and on endothelial cells of liver sinusoids and lymph node sinuses. These interactions allow capture of viral particles at mucosal surfaces by these cells and subsequent transmission to permissive cells. HIV subverts the migration properties of dendritic cells to gain access to CD4+ T-cells in lymph nodes. Virus transmission to permissive T-cells occurs either in trans (without DCs infection, through viral capture and transmission), or in cis (following DCs productive infection, through the usual CD4-gp120 interaction), thereby inducing a robust infection. In trans infection, bound virions remain infectious over days and it is proposed that they are not degraded, but protected in non-lysosomal acidic organelles within the DCs close to the cell membrane thus contributing to the viral infectious potential during DCs' migration from the periphery to the lymphoid tissues. On arrival at lymphoid tissues, intact virions recycle back to DCs' cell surface allowing virus transmission to CD4+ T-cells. Acts as a class I viral fusion protein. Under the current model, the protein has at least 3 conformational states: pre-fusion native state, pre-hairpin intermediate state, and post-fusion hairpin state. During fusion of viral and target intracellular membranes, the coiled coil regions (heptad repeats) assume a trimer-of-hairpins structure, positioning the fusion peptide in close proximity to the C-terminal region of the ectodomain. The formation of this structure appears to drive apposition and subsequent fusion of viral and target cell membranes. Complete fusion occurs in host cell endosomes and is dynamin-dependent, however some lipid transfer might occur at the plasma membrane. The virus undergoes clathrin-dependent internalization long before endosomal fusion, thus minimizing the surface exposure of conserved viral epitopes during fusion and reducing the efficacy of inhibitors targeting these epitopes. Membranes fusion leads to delivery of the nucleocapsid into the cytoplasm. In Human immunodeficiency virus type 1 group M subtype B (isolate BRVA) (HIV-1), this protein is Envelope glycoprotein gp160.